The sequence spans 256 residues: MNNDVFPNKFKAALAAKQVQIGCWSALSNPISTEVLGLAGFDWLVLDGEHAPNDISTFIPQLMALKGSASAPVVRVPTNEPVIIKRLLDIGFYNFLIPFVETKEEAEQAVASTRYPPEGIRGVSVSHRANMFGTVADYFAQSNKNITILVQIESQQGVDNVDAIAATEGVDGIFVGPSDLAAALGHLGNASHPDVQKTIQHIFNRASAHGKPSGILAPVEADARRYLEWGATFVAVGSDLGVFRSATQKLADTFKK.

Histidine 50 (proton acceptor) is an active-site residue. Glutamine 151 provides a ligand contact to substrate. Glutamate 153 provides a ligand contact to Mg(2+). Residues serine 178 and aspartate 179 each contribute to the substrate site. Aspartate 179 provides a ligand contact to Mg(2+).

This sequence belongs to the HpcH/HpaI aldolase family. KDGluc aldolase subfamily. In terms of assembly, homohexamer; trimer of dimers. It depends on Mg(2+) as a cofactor.

The catalysed reaction is 5-dehydro-4-deoxy-D-glucarate = 2-hydroxy-3-oxopropanoate + pyruvate. The enzyme catalyses 2-dehydro-3-deoxy-D-glucarate = 2-hydroxy-3-oxopropanoate + pyruvate. It participates in carbohydrate acid metabolism; galactarate degradation; D-glycerate from galactarate: step 2/3. Catalyzes the reversible retro-aldol cleavage of both 5-keto-4-deoxy-D-glucarate and 2-keto-3-deoxy-D-glucarate to pyruvate and tartronic semialdehyde. The protein is 5-keto-4-deoxy-D-glucarate aldolase of Escherichia coli O157:H7 (strain EC4115 / EHEC).